A 295-amino-acid polypeptide reads, in one-letter code: Pyrroline-5-carboxylate reductase (295 aa).

It belongs to the pyrroline-5-carboxylate reductase family.

It localises to the cytoplasm. It carries out the reaction L-proline + NADP(+) = (S)-1-pyrroline-5-carboxylate + NADPH + 2 H(+). It catalyses the reaction L-proline + NAD(+) = (S)-1-pyrroline-5-carboxylate + NADH + 2 H(+). It participates in amino-acid biosynthesis; L-proline biosynthesis; L-proline from L-glutamate 5-semialdehyde: step 1/1. In terms of biological role, catalyzes the reduction of 1-pyrroline-5-carboxylate (PCA) to L-proline. In Mycobacterium tuberculosis (strain CDC 1551 / Oshkosh), this protein is Pyrroline-5-carboxylate reductase.